The sequence spans 113 residues: UPF0122 protein Lreu_1156 (113 aa).

Belongs to the UPF0122 family.

Functionally, might take part in the signal recognition particle (SRP) pathway. This is inferred from the conservation of its genetic proximity to ftsY/ffh. May be a regulatory protein. In Limosilactobacillus reuteri (strain DSM 20016) (Lactobacillus reuteri), this protein is UPF0122 protein Lreu_1156.